A 55-amino-acid polypeptide reads, in one-letter code: Large ribosomal subunit protein bL33 (55 aa).

It belongs to the bacterial ribosomal protein bL33 family.

In Rhizobium etli (strain CIAT 652), this protein is Large ribosomal subunit protein bL33.